Reading from the N-terminus, the 391-residue chain is Pyruvate dehydrogenase E1 component subunit beta-3, chloroplastic (391 aa).

Residues 1-35 (MATAAAASLQYALHGAASASAKPRSAAPGRSVRVV) constitute a chloroplast transit peptide. Glutamate 127 serves as a coordination point for thiamine diphosphate. 4 residues coordinate K(+): isoleucine 180, alanine 228, isoleucine 229, and asparagine 233.

As to quaternary structure, tetramer of 2 alpha and 2 beta subunits. Thiamine diphosphate is required as a cofactor.

Its subcellular location is the plastid. The protein resides in the chloroplast. The enzyme catalyses N(6)-[(R)-lipoyl]-L-lysyl-[protein] + pyruvate + H(+) = N(6)-[(R)-S(8)-acetyldihydrolipoyl]-L-lysyl-[protein] + CO2. In terms of biological role, the pyruvate dehydrogenase complex catalyzes the overall conversion of pyruvate to acetyl-CoA and CO(2). It contains multiple copies of three enzymatic components: pyruvate dehydrogenase (E1), dihydrolipoamide acetyltransferase (E2) and lipoamide dehydrogenase (E3). In Oryza sativa subsp. japonica (Rice), this protein is Pyruvate dehydrogenase E1 component subunit beta-3, chloroplastic.